We begin with the raw amino-acid sequence, 298 residues long: Flavin-dependent thymidylate synthase (298 aa).

In terms of domain architecture, ThyX spans 41 to 251 (GFVRLVDYMG…PLTYAAFVEY (211 aa)). FAD is bound by residues threonine 87, 110-112 (RHR), and glutamate 118. Residues 107–110 (QWVR), 118–122 (EYSAR), and arginine 190 each bind dUMP. A ThyX motif motif is present at residues 110–120 (RHRTANVNEYS). Residues 206 to 208 (DLH) and histidine 212 each bind FAD. Position 217 (arginine 217) interacts with dUMP. Arginine 217 (involved in ionization of N3 of dUMP, leading to its activation) is an active-site residue.

This sequence belongs to the thymidylate synthase ThyX family. As to quaternary structure, homotetramer. The cofactor is FAD.

It catalyses the reaction dUMP + (6R)-5,10-methylene-5,6,7,8-tetrahydrofolate + NADPH + H(+) = dTMP + (6S)-5,6,7,8-tetrahydrofolate + NADP(+). The protein operates within pyrimidine metabolism; dTTP biosynthesis. Catalyzes the reductive methylation of 2'-deoxyuridine-5'-monophosphate (dUMP) to 2'-deoxythymidine-5'-monophosphate (dTMP) while utilizing 5,10-methylenetetrahydrofolate (mTHF) as the methyl donor, and NADPH and FADH(2) as the reductant. The chain is Flavin-dependent thymidylate synthase from Ehrlichia ruminantium (strain Welgevonden).